The following is a 430-amino-acid chain: Glutamate-1-semialdehyde 2,1-aminomutase (430 aa).

Position 265 is an N6-(pyridoxal phosphate)lysine (Lys265).

This sequence belongs to the class-III pyridoxal-phosphate-dependent aminotransferase family. HemL subfamily. As to quaternary structure, homodimer. Requires pyridoxal 5'-phosphate as cofactor.

Its subcellular location is the cytoplasm. It carries out the reaction (S)-4-amino-5-oxopentanoate = 5-aminolevulinate. The protein operates within porphyrin-containing compound metabolism; protoporphyrin-IX biosynthesis; 5-aminolevulinate from L-glutamyl-tRNA(Glu): step 2/2. The polypeptide is Glutamate-1-semialdehyde 2,1-aminomutase (Shewanella baltica (strain OS223)).